We begin with the raw amino-acid sequence, 1687 residues long: Vitellogenin-2 (1687 aa).

Positions 1-15 (MRVLVLALTVALVAG) are cleaved as a signal peptide. The Vitellogenin domain occupies 24-663 (FAPGKTYEYK…DAATVLPKNI (640 aa)). N-linked (GlcNAc...) asparagine glycans are attached at residues asparagine 941, asparagine 945, asparagine 954, asparagine 1004, asparagine 1019, and asparagine 1083. The segment at 1081 to 1174 (LKNSTKASSS…SSSSSKTKWQ (94 aa)) is disordered. Positions 1088–1127 (SSSSSGSSRSSRSRSSSSSSSSSSSSSSRSSSSSSRSSSS) are enriched in low complexity. Asparagine 1142 is a glycosylation site (N-linked (GlcNAc...) asparagine). The segment covering 1148–1169 (SSSSSSSSSSSSSSSSSSSSSS) has biased composition (low complexity). N-linked (GlcNAc...) asparagine glycans are attached at residues asparagine 1179, asparagine 1257, asparagine 1292, asparagine 1342, asparagine 1361, asparagine 1366, and asparagine 1390. The VWFD domain maps to 1417-1593 (AECTVVEDTV…SWVLPAKSCR (177 aa)). Cystine bridges form between cysteine 1419–cysteine 1556 and cysteine 1442–cysteine 1592. Residues asparagine 1577 and asparagine 1655 are each glycosylated (N-linked (GlcNAc...) asparagine).

Post-translationally, phosvitin, an egg yolk storage protein, is one of the most highly phosphorylated (10%) proteins in nature. Produced by the liver, secreted into the blood and then sequestered by receptor mediated endocytosis into growing oocytes, where it is generally cleaved, giving rise to the respective yolk components lipovitellins and phosvitin.

In terms of biological role, precursor of the egg-yolk proteins that are sources of nutrients during early development of oviparous organisms. This chain is Vitellogenin-2, found in Fundulus heteroclitus (Killifish).